We begin with the raw amino-acid sequence, 59 residues long: Large ribosomal subunit protein bL32 (59 aa).

The tract at residues 1 to 59 is disordered; that stretch reads MAVQQNKKSPSKRGMHRSHDALTAPALSVDSTTGEVHRPHHISPNGMYRGRKVVKVKGE. Over residues 49–59 the composition is skewed to basic residues; that stretch reads RGRKVVKVKGE.

It belongs to the bacterial ribosomal protein bL32 family.

The polypeptide is Large ribosomal subunit protein bL32 (rpmF) (Neisseria meningitidis serogroup A / serotype 4A (strain DSM 15465 / Z2491)).